Reading from the N-terminus, the 264-residue chain is Thymidylate synthase (264 aa).

A dUMP-binding site is contributed by Arg-21. His-51 contributes to the (6R)-5,10-methylene-5,6,7,8-tetrahydrofolate binding site. 126 to 127 is a dUMP binding site; the sequence is RR. The active-site Nucleophile is the Cys-146. DUMP is bound by residues 166 to 169, Asn-177, and 207 to 209; these read RSCD and HLY. Asp-169 provides a ligand contact to (6R)-5,10-methylene-5,6,7,8-tetrahydrofolate. Ala-263 lines the (6R)-5,10-methylene-5,6,7,8-tetrahydrofolate pocket.

It belongs to the thymidylate synthase family. Bacterial-type ThyA subfamily. In terms of assembly, homodimer.

Its subcellular location is the cytoplasm. It catalyses the reaction dUMP + (6R)-5,10-methylene-5,6,7,8-tetrahydrofolate = 7,8-dihydrofolate + dTMP. It participates in pyrimidine metabolism; dTTP biosynthesis. Functionally, catalyzes the reductive methylation of 2'-deoxyuridine-5'-monophosphate (dUMP) to 2'-deoxythymidine-5'-monophosphate (dTMP) while utilizing 5,10-methylenetetrahydrofolate (mTHF) as the methyl donor and reductant in the reaction, yielding dihydrofolate (DHF) as a by-product. This enzymatic reaction provides an intracellular de novo source of dTMP, an essential precursor for DNA biosynthesis. The protein is Thymidylate synthase of Escherichia fergusonii (strain ATCC 35469 / DSM 13698 / CCUG 18766 / IAM 14443 / JCM 21226 / LMG 7866 / NBRC 102419 / NCTC 12128 / CDC 0568-73).